Reading from the N-terminus, the 116-residue chain is Small ribosomal subunit protein uS13m (116 aa).

This sequence belongs to the universal ribosomal protein uS13 family. Part of the small ribosomal subunit.

Its subcellular location is the mitochondrion. Its function is as follows. Located at the top of the head of the small subunit, it contacts several helices of the 18S rRNA. In Daucus carota (Wild carrot), this protein is Small ribosomal subunit protein uS13m (RPS13).